The chain runs to 144 residues: Large ribosomal subunit protein uL13 (144 aa).

This sequence belongs to the universal ribosomal protein uL13 family. In terms of assembly, part of the 50S ribosomal subunit.

In terms of biological role, this protein is one of the early assembly proteins of the 50S ribosomal subunit, although it is not seen to bind rRNA by itself. It is important during the early stages of 50S assembly. This chain is Large ribosomal subunit protein uL13, found in Clostridium tetani (strain Massachusetts / E88).